The chain runs to 316 residues: Transaldolase (316 aa).

Catalysis depends on lysine 131, which acts as the Schiff-base intermediate with substrate.

Belongs to the transaldolase family. Type 1 subfamily. As to quaternary structure, homodimer.

It is found in the cytoplasm. The catalysed reaction is D-sedoheptulose 7-phosphate + D-glyceraldehyde 3-phosphate = D-erythrose 4-phosphate + beta-D-fructose 6-phosphate. Its pathway is carbohydrate degradation; pentose phosphate pathway; D-glyceraldehyde 3-phosphate and beta-D-fructose 6-phosphate from D-ribose 5-phosphate and D-xylulose 5-phosphate (non-oxidative stage): step 2/3. Its function is as follows. Transaldolase is important for the balance of metabolites in the pentose-phosphate pathway. This chain is Transaldolase, found in Glaesserella parasuis serovar 5 (strain SH0165) (Haemophilus parasuis).